A 288-amino-acid chain; its full sequence is Histone-lysine N-methyltransferase Suv4-20 (288 aa).

Residues 128–238 (QECKRYSQEG…PGDEITCFYG (111 aa)) enclose the SET domain.

Belongs to the class V-like SAM-binding methyltransferase superfamily. Histone-lysine methyltransferase family. Suvar4-20 subfamily.

The protein resides in the nucleus. It is found in the chromosome. It carries out the reaction N(6)-methyl-L-lysyl(20)-[histone H4] + S-adenosyl-L-methionine = N(6),N(6)-dimethyl-L-lysyl(20)-[histone H4] + S-adenosyl-L-homocysteine + H(+). It catalyses the reaction N(6),N(6)-dimethyl-L-lysyl(20)-[histone H4] + S-adenosyl-L-methionine = N(6),N(6),N(6)-trimethyl-L-lysyl(20)-[histone H4] + S-adenosyl-L-homocysteine + H(+). Its function is as follows. Histone methyltransferase that specifically di- and trimethylates 'Lys-20' of histone H4 (H4K20me2/me3). H4 'Lys-20' trimethylation represents a specific tag for epigenetic transcriptional repression. Contributes to dosage compensation of X chromosome-relative to autosome-linked gene expression, possibly by converting H4K20me1 to H4K20m2/me3 on autosomes. Involved in the regulation of growth and body fat metabolism downstream of the TOR complex 2 pathway. The chain is Histone-lysine N-methyltransferase Suv4-20 (set-4) from Caenorhabditis elegans.